We begin with the raw amino-acid sequence, 839 residues long: Autophagy-related protein 9A (839 aa).

Residues 1–21 form a disordered region; that stretch reads MAQFDTEYQRLEASYSDSPPG. The residue at position 2 (A2) is an N-acetylalanine. Residues 2–61 are Cytoplasmic-facing; the sequence is AQFDTEYQRLEASYSDSPPGEEDLLVHVPEGSKSPWHHIENLDLFFSRVYNLHQKNGFTC. Residues 8 to 11 carry the Tyrosine-based sorting signal motif; it reads YQRL. Residues S14, S16, and S18 each carry the phosphoserine modification. A helical transmembrane segment spans residues 62 to 84; sequence MLIGEIFELMQFLFVVAFTTFLV. Residues 85-128 are Lumenal-facing; it reads SCVDYDILFANKMVNHSLHPTEPVKVTLPDAFLPAQVCSARIQE. Residue N99 is glycosylated (N-linked (GlcNAc...) asparagine). The chain crosses the membrane as a helical span at residues 129–154; it reads NGSLITILVIAGVFWVHRLIKFIYNI. Topologically, residues 155–290 are cytoplasmic; the sequence is CCYWEIHSFY…ELAQRLSNRI (136 aa). The stretch at 291 to 301 is an intramembrane region; sequence LWIGIANFLLC. Residues 302–319 lie on the Cytoplasmic side of the membrane; sequence PLILIWQILYAFFSYAEV. The stretch at 320–328 is an intramembrane region; the sequence is LKREPGALG. Residues 329 to 371 are Cytoplasmic-facing; it reads ARCWSLYGRCYLRHFNELEHELQSRLNRGYKPASKYMNCFLSP. The helical transmembrane segment at 372-397 threads the bilayer; that stretch reads LLTLLAKNCAFFAGSILAVLIALTIY. The Lumenal portion of the chain corresponds to 398–406; it reads DEDVLAVEH. The chain crosses the membrane as a helical span at residues 407-424; the sequence is VLTTVTLLGVTVTVCRSF. Residues 425-470 lie on the Cytoplasmic side of the membrane; sequence IPDQHMVFCPEQLLRVILAHIHYMPDHWQGNAHRSQTRDEFAQLFQ. Residues 471–480 lie within the membrane without spanning it; sequence YKAVFILEEL. Over 481–483 the chain is Cytoplasmic; the sequence is LSP. An intramembrane segment occupies 484-492; the sequence is IVTPLILIF. At 493-839 the chain is on the cytoplasmic side; that stretch reads CLRPRALEII…DELPPQVHKV (347 aa). 5 positions are modified to phosphoserine: S656, S735, S738, S741, and S828. 2 disordered regions span residues 656-688 and 719-839; these read SPLQ…GSSV and QQAQ…VHKV. Positions 724 to 736 are enriched in basic and acidic residues; that stretch reads EPERHVWHRRESD. Acidic residues-rich tracts occupy residues 737-747 and 823-832; these read ESGESAPEEGG and VPEEGSEDEL.

The protein belongs to the ATG9 family. Homotrimer; forms a homotrimer with a central pore that forms a path between the two membrane leaflets. Interacts (via cytoplasmic its C-terminus) with ATG2A. Interacts with SUPT20H. Interacts (via the tyrosine-based sorting signal motif) with AP4M1; promoting association with the AP-4 complex. Interacts with ARFIP1 and ARFIP2. Interacts with PI4K2A and PI4KB. Interacts with ATG4A; the interaction is direct and promotes ATG9A trafficking. Post-translationally, ufmylated in a DDRGK1 dependent manner.

The protein localises to the preautophagosomal structure membrane. It localises to the cytoplasmic vesicle. It is found in the autophagosome membrane. The protein resides in the golgi apparatus. Its subcellular location is the trans-Golgi network membrane. The protein localises to the late endosome membrane. It localises to the recycling endosome membrane. It is found in the endoplasmic reticulum membrane. The protein resides in the mitochondrion membrane. It carries out the reaction a 1,2-diacyl-sn-glycero-3-phosphocholine(in) = a 1,2-diacyl-sn-glycero-3-phosphocholine(out). The catalysed reaction is a 1,2-diacyl-sn-glycero-3-phospho-L-serine(in) = a 1,2-diacyl-sn-glycero-3-phospho-L-serine(out). The enzyme catalyses a 1,2-diacyl-sn-glycero-3-phosphoethanolamine(in) = a 1,2-diacyl-sn-glycero-3-phosphoethanolamine(out). In terms of biological role, phospholipid scramblase involved in autophagy by mediating autophagosomal membrane expansion. Cycles between the preautophagosomal structure/phagophore assembly site (PAS) and the cytoplasmic vesicle pool and supplies membrane for the growing autophagosome. Lipid scramblase activity plays a key role in preautophagosomal structure/phagophore assembly by distributing the phospholipids that arrive through ATG2 (ATG2A or ATG2B) from the cytoplasmic to the luminal leaflet of the bilayer, thereby driving autophagosomal membrane expansion. Also required to supply phosphatidylinositol 4-phosphate to the autophagosome initiation site by recruiting the phosphatidylinositol 4-kinase beta (PI4KB) in a process dependent on ARFIP2, but not ARFIP1. In addition to autophagy, also plays a role in necrotic cell death. The sequence is that of Autophagy-related protein 9A from Bos taurus (Bovine).